A 728-amino-acid chain; its full sequence is Microtubule-associated protein VP5 (728 aa).

It belongs to the reoviridae microtubule-associated protein family.

The protein resides in the virion. The protein localises to the host cytoplasm. It is found in the host cytoskeleton. Minor inner capsid component. Displays NTPase and RNA 5'-triphosphatase (RTPase) activities. May function as a cofactor of polymerase. Associates with microtubules and plays a role in the formation, structural organization and morphology of viral inclusions, where the assembly of cores and the replication of viral RNA occur. The protein is Microtubule-associated protein VP5 (S5) of Aquareovirus C (isolate Golden shiner/USA/GSRV/1977) (AQRV-C).